We begin with the raw amino-acid sequence, 145 residues long: D-aminoacyl-tRNA deacylase (145 aa).

The short motif at 137–138 (GP) is the Gly-cisPro motif, important for rejection of L-amino acids element.

This sequence belongs to the DTD family. Homodimer.

The protein resides in the cytoplasm. It catalyses the reaction glycyl-tRNA(Ala) + H2O = tRNA(Ala) + glycine + H(+). The enzyme catalyses a D-aminoacyl-tRNA + H2O = a tRNA + a D-alpha-amino acid + H(+). Functionally, an aminoacyl-tRNA editing enzyme that deacylates mischarged D-aminoacyl-tRNAs. Also deacylates mischarged glycyl-tRNA(Ala), protecting cells against glycine mischarging by AlaRS. Acts via tRNA-based rather than protein-based catalysis; rejects L-amino acids rather than detecting D-amino acids in the active site. By recycling D-aminoacyl-tRNA to D-amino acids and free tRNA molecules, this enzyme counteracts the toxicity associated with the formation of D-aminoacyl-tRNA entities in vivo and helps enforce protein L-homochirality. This Shewanella sp. (strain ANA-3) protein is D-aminoacyl-tRNA deacylase.